A 385-amino-acid chain; its full sequence is Spermidine/putrescine import ATP-binding protein PotA (385 aa).

Residues 27–257 enclose the ABC transporter domain; that stretch reads ASFRAVSKHY…PANLFVAQFA (231 aa). Position 59-66 (59-66) interacts with ATP; it reads GPSGCGKT.

This sequence belongs to the ABC transporter superfamily. Spermidine/putrescine importer (TC 3.A.1.11.1) family. As to quaternary structure, the complex is composed of two ATP-binding proteins (PotA), two transmembrane proteins (PotB and PotC) and a solute-binding protein (PotD).

The protein localises to the cell inner membrane. It carries out the reaction ATP + H2O + polyamine-[polyamine-binding protein]Side 1 = ADP + phosphate + polyamineSide 2 + [polyamine-binding protein]Side 1.. Part of the ABC transporter complex PotABCD involved in spermidine/putrescine import. Responsible for energy coupling to the transport system. The protein is Spermidine/putrescine import ATP-binding protein PotA of Methylococcus capsulatus (strain ATCC 33009 / NCIMB 11132 / Bath).